Here is a 321-residue protein sequence, read N- to C-terminus: Endochitinase 33 (321 aa).

A signal peptide spans 1–19; sequence MPSLTALASLLALVPSALA. The 295-residue stretch at 27 to 321 folds into the GH18 domain; that stretch reads QNIAVYWGQN…FETQVVNALR (295 aa). Glutamate 167 serves as the catalytic Proton donor.

Belongs to the glycosyl hydrolase 18 family. Chitinase class III subfamily. Monomer.

The protein localises to the secreted. It catalyses the reaction Random endo-hydrolysis of N-acetyl-beta-D-glucosaminide (1-&gt;4)-beta-linkages in chitin and chitodextrins.. Its function is as follows. Secreted chitinase involved in the degradation of chitin, a component of the cell walls of fungi and exoskeletal elements of some animals (including worms and arthropods). Plays a morphogenetic role during apical growth, cell division and differentiation (cell wall morphogenesis). May be involved in the degradation and further assimilation of phytopathogenic fungi, namely mycoparasitism, the major mechanism accounting for the antagonistic activity against phytopathogenic fungi displayed by Trichoderma. The polypeptide is Endochitinase 33 (chit33) (Trichoderma harzianum (Hypocrea lixii)).